Reading from the N-terminus, the 338-residue chain is Lipoyl synthase (338 aa).

Positions 1–24 (MTTVQEAVPNLIPTQDATPRPAPK) are disordered. [4Fe-4S] cluster is bound by residues C84, C89, C95, C110, C114, C117, and S324. The Radical SAM core domain maps to 96-313 (FSGGTATFMI…AEEGYKMGFK (218 aa)).

This sequence belongs to the radical SAM superfamily. Lipoyl synthase family. It depends on [4Fe-4S] cluster as a cofactor.

The protein localises to the cytoplasm. It catalyses the reaction [[Fe-S] cluster scaffold protein carrying a second [4Fe-4S](2+) cluster] + N(6)-octanoyl-L-lysyl-[protein] + 2 oxidized [2Fe-2S]-[ferredoxin] + 2 S-adenosyl-L-methionine + 4 H(+) = [[Fe-S] cluster scaffold protein] + N(6)-[(R)-dihydrolipoyl]-L-lysyl-[protein] + 4 Fe(3+) + 2 hydrogen sulfide + 2 5'-deoxyadenosine + 2 L-methionine + 2 reduced [2Fe-2S]-[ferredoxin]. Its pathway is protein modification; protein lipoylation via endogenous pathway; protein N(6)-(lipoyl)lysine from octanoyl-[acyl-carrier-protein]: step 2/2. Its function is as follows. Catalyzes the radical-mediated insertion of two sulfur atoms into the C-6 and C-8 positions of the octanoyl moiety bound to the lipoyl domains of lipoate-dependent enzymes, thereby converting the octanoylated domains into lipoylated derivatives. This is Lipoyl synthase from Pseudomonas putida (strain W619).